The primary structure comprises 341 residues: MAYKGQENLEHLNPRKVGVLITNLGTPDAPETGALRRYLREFLSDPRVVEIPRFIWFFILNLVILVIRPRKSAEAYKSVWTEEGSPLLVYSLAQGEGIRQRLQSKYGDDVVVRVAMRYGNPSIASQLQAFEDEGIRKLVVLPLYPQYSGSTNGSTFDAVAQDFMGRRLLPDLRFISHYPDYPPYIQAMAEHIRAYREKNGSADKLVFSFHGVPKRFLLKGDPYFHECHQTSQLLAKALGLSDGQWMTTFQSRFGAEEWLQPYTDATMKSLPGEGVKSVQVFCPGFSADCLETVEEIDQENREYFEEAGGESFAYISALNAEPAHLDALAQLVEDNLQGFLP.

Fe cation-binding residues include His210 and Glu291.

The protein belongs to the ferrochelatase family.

The protein localises to the cytoplasm. It catalyses the reaction heme b + 2 H(+) = protoporphyrin IX + Fe(2+). It participates in porphyrin-containing compound metabolism; protoheme biosynthesis; protoheme from protoporphyrin-IX: step 1/1. Functionally, catalyzes the ferrous insertion into protoporphyrin IX. The chain is Ferrochelatase from Alcanivorax borkumensis (strain ATCC 700651 / DSM 11573 / NCIMB 13689 / SK2).